A 170-amino-acid chain; its full sequence is S-ribosylhomocysteine lyase (170 aa).

Residues His-54, His-58, and Cys-128 each coordinate Fe cation.

The protein belongs to the LuxS family. Homodimer. It depends on Fe cation as a cofactor.

The catalysed reaction is S-(5-deoxy-D-ribos-5-yl)-L-homocysteine = (S)-4,5-dihydroxypentane-2,3-dione + L-homocysteine. Functionally, involved in the synthesis of autoinducer 2 (AI-2) which is secreted by bacteria and is used to communicate both the cell density and the metabolic potential of the environment. The regulation of gene expression in response to changes in cell density is called quorum sensing. Catalyzes the transformation of S-ribosylhomocysteine (RHC) to homocysteine (HC) and 4,5-dihydroxy-2,3-pentadione (DPD). This Marinomonas sp. (strain MWYL1) protein is S-ribosylhomocysteine lyase.